Here is a 204-residue protein sequence, read N- to C-terminus: Casparian strip membrane protein 2 (204 aa).

Residues 1 to 42 (MKNESTTIDVPAESSSAMKGKAPLIGVARDHTTSGSGGYNRG) lie on the Cytoplasmic side of the membrane. The helical transmembrane segment at 43–63 (LSIFDFLLRLAAIVAALAAAA) threads the bilayer. At 64–92 (TMGTSDETLPFFTQFLQFEASYDDLPTFQ) the chain is on the extracellular side. A helical membrane pass occupies residues 93 to 113 (FFVIAMALVGGYLVLSLPISV). Residues 114–125 (VTILRPLATAPR) are Cytoplasmic-facing. The helical transmembrane segment at 126 to 146 (LLLLVLDTAVLALNTAAASSA) threads the bilayer. Residues 147-178 (AAISYLAHSGNQNTNWLPICQQFGDFCQKSSG) are Extracellular-facing. The helical transmembrane segment at 179-199 (AVVSAFISVVFFTILVVISGV) threads the bilayer. Topologically, residues 200–204 (ALKRH) are cytoplasmic.

This sequence belongs to the Casparian strip membrane proteins (CASP) family. As to quaternary structure, homodimer and heterodimers.

The protein resides in the cell membrane. Regulates membrane-cell wall junctions and localized cell wall deposition. Required for establishment of the Casparian strip membrane domain (CSD) and the subsequent formation of Casparian strips, a cell wall modification of the root endodermis that determines an apoplastic barrier between the intraorganismal apoplasm and the extraorganismal apoplasm and prevents lateral diffusion. The polypeptide is Casparian strip membrane protein 2 (Arabidopsis lyrata subsp. lyrata (Lyre-leaved rock-cress)).